The following is a 339-amino-acid chain: Methylglutaconyl-CoA hydratase, mitochondrial (339 aa).

The N-terminal 67 residues, 1-67 (MAAAVAAAPG…AGGPAPKRGY (67 aa)), are a transit peptide targeting the mitochondrion. Lys100 is subject to N6-acetyllysine; alternate. At Lys100 the chain carries N6-succinyllysine; alternate. The RNA-binding stretch occupies residues 105 to 119 (KNLIKMLSKAVDALK). N6-succinyllysine is present on Lys109. N6-acetyllysine; alternate is present on residues Lys113 and Lys144. N6-succinyllysine; alternate is present on residues Lys113 and Lys144. An N6-succinyllysine mark is found at Lys148 and Lys160. 2 positions are modified to N6-acetyllysine; alternate: Lys204 and Lys211. N6-succinyllysine; alternate occurs at positions 204 and 211. Lys329 carries the N6-succinyllysine modification.

The protein belongs to the enoyl-CoA hydratase/isomerase family. Homohexamer.

It is found in the mitochondrion. The catalysed reaction is (3S)-3-hydroxy-3-methylglutaryl-CoA = 3-methyl-(2E)-glutaconyl-CoA + H2O. It carries out the reaction (3S)-citramalyl-CoA = itaconyl-CoA + H2O. The enzyme catalyses 3-hydroxyisovaleryl-CoA = 3-methylbut-2-enoyl-CoA + H2O. It catalyses the reaction (S)-3-hydroxyglutaryl-CoA = (2E)-glutaconyl-CoA + H2O. The protein operates within amino-acid degradation; L-leucine degradation; (S)-3-hydroxy-3-methylglutaryl-CoA from 3-isovaleryl-CoA: step 3/3. Its function is as follows. Catalyzes the fifth step in the leucine degradation pathway, the reversible hydration of 3-methylglutaconyl-CoA (3-MG-CoA) to 3-hydroxy-3-methylglutaryl-CoA (HMG-CoA). Can catalyze the reverse reaction but at a much lower rate in vitro. HMG-CoA is then quickly degraded by another enzyme (such as HMG-CoA lyase) to give acetyl-CoA and acetoacetate. Uses other substrates such as (2E)-glutaconyl-CoA efficiently in vitro, and to a lesser extent 3-methylcrotonyl-CoA (3-methyl-(2E)-butenoyl-CoA), crotonyl-CoA ((2E)-butenoyl-CoA) and 3-hydroxybutanoyl-CoA (the missing carboxylate reduces affinity to the active site). Originally it was identified as an RNA-binding protein as it binds to AU-rich elements (AREs) in vitro. AREs direct rapid RNA degradation and mRNA deadenylation. Might have itaconyl-CoA hydratase activity, converting itaconyl-CoA into citramalyl-CoA in the C5-dicarboxylate catabolism pathway. The C5-dicarboxylate catabolism pathway is required to detoxify itaconate, an antimicrobial metabolite and immunomodulator produced by macrophages during certain infections, that can act as a vitamin B12-poisoning metabolite. This Homo sapiens (Human) protein is Methylglutaconyl-CoA hydratase, mitochondrial (AUH).